A 372-amino-acid polypeptide reads, in one-letter code: Alanine dehydrogenase 2 (372 aa).

His95 is an active-site residue. 169-199 (KVTIIGGGQAGTNAAKIALGLGADVTILDVN) contacts NAD(+).

This sequence belongs to the AlaDH/PNT family.

It catalyses the reaction L-alanine + NAD(+) + H2O = pyruvate + NH4(+) + NADH + H(+). It participates in amino-acid degradation; L-alanine degradation via dehydrogenase pathway; NH(3) and pyruvate from L-alanine: step 1/1. In terms of biological role, may play a role in cell wall synthesis as L-alanine is an important constituent of the peptidoglycan layer. This chain is Alanine dehydrogenase 2 (ald2), found in Staphylococcus aureus (strain COL).